The following is an 844-amino-acid chain: Bifunctional abietadiene synthase, chloroplastic (844 aa).

Residues 1 to 46 constitute a chloroplast transit peptide; it reads QSIPHFSTTLNAGSSARKRRSLYLRWGKGSNKIIACVGEGATSVPY. Residue Lys245 coordinates substrate. Mg(2+) is bound by residues Asp378 and Asp380. A DXDD motif motif is present at residues 378-381; sequence DIDD. Lys465 contacts substrate. Residues Asp597, Asp601, Asn741, Thr745, and Glu749 each contribute to the Mg(2+) site. Residues 597-601 carry the DDXXD motif motif; that stretch reads DDLYD.

It belongs to the terpene synthase family. Tpsd subfamily. As to quaternary structure, monomer. It depends on Mg(2+) as a cofactor.

It localises to the plastid. Its subcellular location is the chloroplast. The catalysed reaction is (2E,6E,10E)-geranylgeranyl diphosphate = (+)-copalyl diphosphate. It catalyses the reaction (+)-copalyl diphosphate = abieta-7,13-diene + diphosphate. It carries out the reaction (+)-copalyl diphosphate = neoabietadiene + diphosphate. The enzyme catalyses (+)-copalyl diphosphate = abieta-8(14),12-diene + diphosphate. It participates in terpene metabolism; oleoresin biosynthesis. Involved in defensive oleoresin formation in conifers in response to insect attack or other injury. Involved in diterpene (C20) olefins biosynthesis. Bifunctional enzyme that catalyzes two sequential cyclizations of geranylgeranyl diphosphate (GGPP) to abietadiene. The copalyl diphosphate (CPP) intermediate diffuses freely between the 2 active sites in the enzyme. The sequence is that of Bifunctional abietadiene synthase, chloroplastic (LAS) from Abies balsamea (Balsam fir).